The following is an 831-amino-acid chain: Replication restart protein PriA (831 aa).

Residues 304-471 (VLPLQGYHQV…HRHQNDPQRH (168 aa)) form the Helicase ATP-binding domain. 317–324 (GVTGSGKT) serves as a coordination point for ATP. A DEAH box motif is present at residues 413–416 (DEEH). 8 residues coordinate Zn(2+): cysteine 537, cysteine 540, cysteine 546, cysteine 549, cysteine 568, cysteine 571, cysteine 581, and cysteine 584. A Helicase C-terminal domain is found at 575–735 (EIQPKVCPEC…ELPQREMLNY (161 aa)).

The protein belongs to the helicase family. PriA subfamily. Component of the replication restart primosome. Zn(2+) is required as a cofactor.

The catalysed reaction is Couples ATP hydrolysis with the unwinding of duplex DNA by translocating in the 3'-5' direction.. It catalyses the reaction ATP + H2O = ADP + phosphate + H(+). In terms of biological role, initiates the restart of stalled replication forks, which reloads the replicative helicase on sites other than the origin of replication. Recognizes and binds to abandoned replication forks and remodels them to uncover a helicase loading site. Promotes assembly of the primosome at these replication forks. The sequence is that of Replication restart protein PriA from Synechocystis sp. (strain ATCC 27184 / PCC 6803 / Kazusa).